The following is a 202-amino-acid chain: 3-isopropylmalate dehydratase small subunit (202 aa).

The protein belongs to the LeuD family. LeuD type 1 subfamily. As to quaternary structure, heterodimer of LeuC and LeuD.

It catalyses the reaction (2R,3S)-3-isopropylmalate = (2S)-2-isopropylmalate. It functions in the pathway amino-acid biosynthesis; L-leucine biosynthesis; L-leucine from 3-methyl-2-oxobutanoate: step 2/4. In terms of biological role, catalyzes the isomerization between 2-isopropylmalate and 3-isopropylmalate, via the formation of 2-isopropylmaleate. In Paenarthrobacter aurescens (strain TC1), this protein is 3-isopropylmalate dehydratase small subunit.